A 942-amino-acid chain; its full sequence is Lambda-carrageenase (942 aa).

A signal peptide spans 1–25 (MKIKILSAMVASSLLIGCVIPTVKA).

In terms of assembly, monomer.

It localises to the secreted. It catalyses the reaction Endohydrolysis of (1-&gt;4)-beta-linkages in the backbone of lambda-carrageenan, resulting in the tetrasaccharide alpha-D-Galp2,6S2-(1-&gt;3)-beta-D-Galp2S-(1-&gt;4)-alpha-D-Galp2,6S2-(1-&gt;3)-D-Galp2S.. Hydrolyzes lambda-carrageenan with inversion of anomeric configuration. Does not hydrolyze iota- and kappa-carrageenans, agarose or porphyran. The protein is Lambda-carrageenase of Pseudoalteromonas carrageenovora (Alteromonas carrageenovora).